The primary structure comprises 258 residues: Alpha-fibrinogenase-like (258 aa).

The N-terminal stretch at 1–18 (MVLIRVLANLLVLQLSYA) is a signal peptide. A propeptide spanning residues 19–24 (QKSSEL) is cleaved from the precursor. In terms of domain architecture, Peptidase S1 spans 25–249 (VVGGHPCNIY…YTDWIHSIIA (225 aa)). 6 cysteine pairs are disulfide-bonded: Cys31/Cys163, Cys50/Cys66, Cys98/Cys256, Cys142/Cys210, Cys174/Cys189, and Cys200/Cys225. Asn44 carries N-linked (GlcNAc...) asparagine glycosylation. Catalysis depends on charge relay system residues His65 and Asp110. Ser204 acts as the Charge relay system in catalysis.

This sequence belongs to the peptidase S1 family. Snake venom subfamily. As to quaternary structure, monomer. In terms of tissue distribution, expressed by the venom gland.

The protein localises to the secreted. Its function is as follows. Degrades alpha chain of fibrinogen (FGA), and has strong caseinolytic activity. Cleaves oxidized insulin B-chain at '40-Tyr-|-Leu-41', '48-Phe-|-Phe-49' and '49-Phe-|-Tyr-50', and glucagon at the bonds '62-Tyr-|-Ser-63', 66-Leu-|-Asp-67' and '78-Leu-|-Met-79' bonds. This Daboia siamensis (Eastern Russel's viper) protein is Alpha-fibrinogenase-like.